The sequence spans 208 residues: Kinetochore protein Spc25 (208 aa).

A coiled-coil region spans residues 31–101 (SKIAAKHQLI…KKQRRDELMG (71 aa)).

The protein belongs to the SPC25 family. In terms of assembly, component of the Ndc80 complex, which is composed of Ndc80, Nuf2 and Spc25.

Its subcellular location is the nucleus. The protein localises to the chromosome. It is found in the centromere. It localises to the kinetochore. Its function is as follows. Acts as a component of the essential kinetochore-associated Ndc80 complex, which is required for chromosome segregation and spindle checkpoint activity during meiosis and mitosis. Required for kinetochore integrity and the organization of stable microtubule binding sites in the outer plate of the kinetochore. Participates in SAC signaling that responds specifically to disruptions in spindle microtubule dynamics. The NDC80 complex synergistically enhances the affinity of the SKA1 complex for microtubules and may allow the NDC80 complex to track depolymerizing microtubules. The protein is Kinetochore protein Spc25 of Drosophila mojavensis (Fruit fly).